Consider the following 281-residue polypeptide: Ribosomal RNA small subunit methyltransferase A (281 aa).

N36, L38, G63, E84, D109, and N127 together coordinate S-adenosyl-L-methionine.

It belongs to the class I-like SAM-binding methyltransferase superfamily. rRNA adenine N(6)-methyltransferase family. RsmA subfamily.

Its subcellular location is the cytoplasm. It catalyses the reaction adenosine(1518)/adenosine(1519) in 16S rRNA + 4 S-adenosyl-L-methionine = N(6)-dimethyladenosine(1518)/N(6)-dimethyladenosine(1519) in 16S rRNA + 4 S-adenosyl-L-homocysteine + 4 H(+). Functionally, specifically dimethylates two adjacent adenosines (A1518 and A1519) in the loop of a conserved hairpin near the 3'-end of 16S rRNA in the 30S particle. May play a critical role in biogenesis of 30S subunits. The sequence is that of Ribosomal RNA small subunit methyltransferase A from Borreliella burgdorferi (strain ATCC 35210 / DSM 4680 / CIP 102532 / B31) (Borrelia burgdorferi).